The chain runs to 84 residues: Small ribosomal subunit protein uS17 (84 aa).

The protein belongs to the universal ribosomal protein uS17 family. In terms of assembly, part of the 30S ribosomal subunit.

Functionally, one of the primary rRNA binding proteins, it binds specifically to the 5'-end of 16S ribosomal RNA. The chain is Small ribosomal subunit protein uS17 from Clostridium botulinum (strain Okra / Type B1).